We begin with the raw amino-acid sequence, 473 residues long: MVLCCWLALVALIPMTLSINPGVKVRLTGKGLEYGRQLGMASIQQKLKTIKVPDISGKQRVSPIGKVKYSLSNMQIVDVGLPKSALDLVPGTGVKLSIGNAFLRMHGNWRVKYLRIIKDSGSFDLNVNDLTITTTIAIKSDETGRPVVSSVNCAATVGSAKIKFHGGASWLYNLFRKFVDKAIRNALQKQMCPLVANAVSDLNPQLKTLNVLAKVDQYAEIEYSMVSSPTVSNSCIDFSLKGEFYNIGKHQEPPFSPAAFSLPPQINNMLYISVSAFTINSAAFVYNTAGALSLYITDDMIPQASPIRLNTRTFGAFIPQVAKRFPGLMMKLLVKTAKNPVVTFEPNKVTVQATSTVTAYAIQPNTTLSPLFVLNLETSVSARVFVSGMRLAGAVTLNKMALTLGTSYVGEFQVRSLDSIFQVVLKVVVIPILNVQLAKGYPLPTLGKMKLVNTELQVLKDYMLIGTDVQFTG.

An N-terminal signal peptide occupies residues 1–18; that stretch reads MVLCCWLALVALIPMTLS. Residues 19-29 are central sheet, part 1; sequence INPGVKVRLTG. The segment at 28–209 is N-terminal barrel; sequence TGKGLEYGRQ…SDLNPQLKTL (182 aa). Cys153 and Cys192 are oxidised to a cystine. A central sheet, part 2 region spans residues 211–275; that stretch reads VLAKVDQYAE…INNMLYISVS (65 aa). The tract at residues 225–230 is cleavage sites for elastase; the sequence is MVSSPT. The tract at residues 276–446 is C-terminal barrel; it reads AFTINSAAFV…LAKGYPLPTL (171 aa). Asn365 carries an N-linked (GlcNAc...) asparagine glycan. A central sheet, part 3 region spans residues 453–472; it reads NTELQVLKDYMLIGTDVQFT.

It belongs to the BPI/LBP/Plunc superfamily. BPI/LBP family. As to quaternary structure, monomer. Homodimer; disulfide-linked. Expressed in spleen. Lower expression in gill, head kidney, entire kidney, skin, intestine and blood and lowest expression in liver and muscle.

Its subcellular location is the secreted. The cytotoxic action of BPI is limited to many species of Gram-negative bacteria; this specificity may be explained by a strong affinity of the very basic N-terminal half for the negatively charged lipopolysaccharides that are unique to the Gram-negative bacterial outer envelope. Exhibits neutralizing capacity towards P.aeruginosa lipopolysaccharides (LPS) and has bactericidal activity against multiple drug resistant (MDR) P.aeruginosa strains derived from people with cystic fibrosis. Has antibacterial activity against E.coli, but not against S.iniae. This chain is Bactericidal permeability-increasing protein, found in Sebastes schlegelii (Korean rockfish).